The following is a 256-amino-acid chain: DNA repair protein RecO (256 aa).

The protein belongs to the RecO family.

Functionally, involved in DNA repair and RecF pathway recombination. The polypeptide is DNA repair protein RecO (Streptococcus pneumoniae (strain Hungary19A-6)).